The following is a 435-amino-acid chain: MARGDKVHINLVVIGHVDSGKSTTTGHLIYKCGGIDKRVIEKFEKESAEQGKGSFKYAWVLDKLKAERERGITIDISLWKFETAKYHFTIIDAPGHRDFIKNMITGTSQADVAILMIASPQGEFEAGISKDGQTREHALLAFTLGVKQMIVCLNKMDEKTVNFSEERYQEIKKELSDYLKKVGYKPDTIPFIPISGFNGDNMLERSTNAPWYKGPILVEALDALEPPKRPVDKPLRLPLQDVYKIGGIGTVPVGRVETGVIKPGMSIQFAPNKVIAECKSVEMHHEQLPEAVPGDNVGFNIKGVSVKDIRRGNVASDAKNDPAKEAATFYSQVIIMNHPGQIQAGYTPVLDCHTAHIACKFETIHDKIDRRTGKSQEENPKFIKNGDAALVTLIPTKALCVEVFQEYPPLGRYAVRDMKQTVAVGVIKKVEKKDK.

The region spanning 6–231 (KVHINLVVIG…DALEPPKRPV (226 aa)) is the tr-type G domain. The tract at residues 15-22 (GHVDSGKS) is G1. 15-22 (GHVDSGKS) contacts GTP. Residues 71–75 (GITID) form a G2 region. A G3 region spans residues 92 to 95 (DAPG). GTP is bound by residues 92 to 96 (DAPGH) and 154 to 157 (NKMD). The interval 154–157 (NKMD) is G4. The tract at residues 195–197 (SGF) is G5.

Belongs to the TRAFAC class translation factor GTPase superfamily. Classic translation factor GTPase family. EF-Tu/EF-1A subfamily.

It is found in the cytoplasm. Functionally, this protein promotes the GTP-dependent binding of aminoacyl-tRNA to the A-site of ribosomes during protein biosynthesis. The sequence is that of Elongation factor 1-alpha from Tetrahymena pyriformis.